The sequence spans 7763 residues: Nonribosomal peptide synthetase agiA (7763 aa).

The interval 20 to 168 (APSVMQEEMI…DGWSARALLE (149 aa)) is condensation 1. The segment at 469–866 (EQAASKWPSK…GRADGQIKLR (398 aa)) is adenylation 1. One can recognise a Carrier 1 domain in the interval 995–1071 (LPESPAERLL…DVARAMSPSS (77 aa)). O-(pantetheine 4'-phosphoryl)serine is present on Ser-1032. The interval 1104 to 1526 (IYPCTPQQEG…GLSDQKLITG (423 aa)) is condensation 2. Residues 1562–1968 (FEMQADMTPQ…GRIDSQIKLR (407 aa)) form an adenylation 2 region. One can recognise a Carrier 2 domain in the interval 2090–2166 (WEQGSIEDKI…SQAKCATSHT (77 aa)). O-(pantetheine 4'-phosphoryl)serine is present on Ser-2127. The tract at residues 2212 to 2556 (DHFNQSVLLD…IMPLVFNYQG (345 aa)) is epimerase (E). The segment at 2676 to 3016 (DIIPCTPMQR…PALVNTLLNF (341 aa)) is condensation 3. The interval 3136-3531 (WAAQVPEKVA…GRMDDQIKIR (396 aa)) is adenylation 3. The 77-residue stretch at 3667–3743 (GPESPTEIML…ELATILNTSY (77 aa)) folds into the Carrier 3 domain. Ser-3704 bears the O-(pantetheine 4'-phosphoryl)serine mark. Positions 3789-4238 (VMPCTPFQEG…ISQSIDALVQ (450 aa)) are condensation 4. Residues 4321–4687 (VGSQQPIIPI…GRFDRQIKIR (367 aa)) are adenylation 4. The Carrier 4 domain occupies 4806–4880 (APTTEREKVI…DLARQLESTA (75 aa)). Ser-4840 is subject to O-(pantetheine 4'-phosphoryl)serine. Residues 4902–5339 (SFAQGRLWFL…ALLNDLSMHD (438 aa)) form a condensation 5 region. Residues 5361-5765 (FRQEARSHPD…GRRDDQVKIR (405 aa)) are adenylation 5. Positions 5820 to 5975 (DAWKNVFDTE…YLSEIVQKLV (156 aa)) are S-adenosyl-L-methionine-dependent N-methyltransferase. The Carrier 5 domain occupies 6306–6381 (EYGSEMERIL…RLADRLLSKQ (76 aa)). Ser-6341 is subject to O-(pantetheine 4'-phosphoryl)serine. Residues 6378-6399 (LSKQSDSNTEANTSTDGKTQHS) form a disordered region. A compositionally biased stretch (polar residues) spans 6379-6399 (SKQSDSNTEANTSTDGKTQHS). The condensation 6 stretch occupies residues 6424 to 6883 (MPCTPFQEGV…TVGDAEEAAL (460 aa)). Residues 6913 to 7327 (RQAMESPCKI…GRMDSQVKLR (415 aa)) are adenylation 6. The 77-residue stretch at 7446-7522 (PSPGTLEATL…SQAFRILCDV (77 aa)) folds into the Carrier 6 domain. The residue at position 7483 (Ser-7483) is an O-(pantetheine 4'-phosphoryl)serine. The segment at 7542 to 7638 (TMVLIHPFFG…TGKGSPFSTV (97 aa)) is thioesterase (TE).

This sequence belongs to the NRP synthetase family.

Functionally, nonribosomal peptide synthetase; part of the gene cluster that mediates the biosynthesis of the aspergillicins A and F, 2 cryptic cyclic hexa-depsipeptides. The hexamodular NRPS agiA catalyzes the condensation of the six amino acid residues including N-Me-L-O-Me-tyrosine, L-proline 1, L-proline 2, D-isoleucine, O-acetyl-threonine, and L-isoleucine. The starting condensation domain (C1) of agiA probably loads acetyl-CoA which is condensed on the N-terminus of threonine by the first module to yield O-acetyl-threonine. The second module then loads L-isoleucine. The epimerase (E) domain on module 2 is probably involved in the formation of the D-isoleucine moiety. Modules 3 and 4 further load 2 successive L-prolines. Module 5 is then involved in the condensation of O-Me-L-tyrosine produced by the O-methyltransferase agiB and the N-methyl transferase (NMeT) domain on module 5 probably catalyzes the N-methylation to yield the N-Me-L-O-Me-tyrosine moiety. The A domain of module 5 loads preferentially O-Me-L-tyrosine, but it can also accept L-phenylalanine, which leads to the production of aspergillicin G. Module 6 then loads the last residue, L-isoleucine. The C-terminal thiolesterase (TE) domain probably cyclizes the peptide using the hydroxy group from threonine to form the cyclic depsipeptide. The polypeptide is Nonribosomal peptide synthetase agiA (Aspergillus flavus (strain ATCC 200026 / FGSC A1120 / IAM 13836 / NRRL 3357 / JCM 12722 / SRRC 167)).